Reading from the N-terminus, the 311-residue chain is Porphobilinogen deaminase (311 aa).

The residue at position 243 (Cys-243) is an S-(dipyrrolylmethanemethyl)cysteine.

This sequence belongs to the HMBS family. In terms of assembly, monomer. Dipyrromethane serves as cofactor.

The catalysed reaction is 4 porphobilinogen + H2O = hydroxymethylbilane + 4 NH4(+). The protein operates within porphyrin-containing compound metabolism; protoporphyrin-IX biosynthesis; coproporphyrinogen-III from 5-aminolevulinate: step 2/4. Its function is as follows. Tetrapolymerization of the monopyrrole PBG into the hydroxymethylbilane pre-uroporphyrinogen in several discrete steps. This Blochmanniella floridana protein is Porphobilinogen deaminase.